The primary structure comprises 117 residues: Large ribosomal subunit protein bL20 (117 aa).

The protein belongs to the bacterial ribosomal protein bL20 family.

Its function is as follows. Binds directly to 23S ribosomal RNA and is necessary for the in vitro assembly process of the 50S ribosomal subunit. It is not involved in the protein synthesizing functions of that subunit. This chain is Large ribosomal subunit protein bL20, found in Mannheimia succiniciproducens (strain KCTC 0769BP / MBEL55E).